The sequence spans 404 residues: Putative replication protein C (404 aa).

Positions 249–287 (PDQIERHKQNSHPESTNEFEPSSREEQGERPSPAIEPQR) are disordered.

It to A.rhizogenes possible replication protein C (RepC).

In Sinorhizobium fredii (strain NBRC 101917 / NGR234), this protein is Putative replication protein C.